A 110-amino-acid polypeptide reads, in one-letter code: Large ribosomal subunit protein uL22 (110 aa).

The protein belongs to the universal ribosomal protein uL22 family. Part of the 50S ribosomal subunit.

Its function is as follows. This protein binds specifically to 23S rRNA; its binding is stimulated by other ribosomal proteins, e.g. L4, L17, and L20. It is important during the early stages of 50S assembly. It makes multiple contacts with different domains of the 23S rRNA in the assembled 50S subunit and ribosome. In terms of biological role, the globular domain of the protein is located near the polypeptide exit tunnel on the outside of the subunit, while an extended beta-hairpin is found that lines the wall of the exit tunnel in the center of the 70S ribosome. The sequence is that of Large ribosomal subunit protein uL22 from Hahella chejuensis (strain KCTC 2396).